The primary structure comprises 1291 residues: Histone-lysine N-methyltransferase SETDB1 (1291 aa).

Positions 18–64 form a coiled coil; that stretch reads ESEEIAELQQAVVEELGISMEELRHFIDEELEKMDCVQQRKKQLAEL. The tract at residues 108 to 147 is disordered; that stretch reads RDSSSEDESSRPTEIIEIPDEDDDVLSIDSGDAGSRTPKD. Ser-112 and Ser-117 each carry phosphoserine. Phosphothreonine is present on Thr-120. A compositionally biased stretch (acidic residues) spans 124-133; it reads EIPDEDDDVL. Residue Lys-182 forms a Glycyl lysine isopeptide (Lys-Gly) (interchain with G-Cter in SUMO2); alternate linkage. Lys-182 is covalently cross-linked (Glycyl lysine isopeptide (Lys-Gly) (interchain with G-Cter in ubiquitin); alternate). Tudor domains lie at 257–320 and 347–403; these read KLYV…LKKT and LLKS…SMKT. The tract at residues 404-545 is disordered; sequence SSASALEKKQ…APAPSALPAP (142 aa). A compositionally biased stretch (polar residues) spans 433-444; that stretch reads QYTQDLTGTGTQ. Residues 448–468 show a composition bias toward pro residues; the sequence is VEPPQPTAPPAPPFPPAPPLS. Polar residues predominate over residues 477 to 515; that stretch reads ESQLAQSRKQVAKKSTSFRPGSVGSGHSSPTSPALSENV. A compositionally biased stretch (low complexity) spans 528–539; the sequence is SPLGSTASAPAP. The 72-residue stretch at 594–665 folds into the MBD domain; sequence YRGKNPLLVP…EMFCLDPYVL (72 aa). One can recognise a Pre-SET domain in the interval 727–800; it reads VGCDCKDGCR…MCTNRLVQHG (74 aa). Residues Cys-729, Cys-731, Cys-735, Cys-741, Cys-743, Cys-781, Cys-785, Cys-787, and Cys-792 each coordinate Zn(2+). The SET domain occupies 803–1266; that stretch reads VRLQLFKTQN…AGTELTWDYN (464 aa). S-adenosyl-L-methionine is bound by residues 813 to 815, Asp-851, and Tyr-853; that span reads KGW. Lys-867 participates in a covalent cross-link: Glycyl lysine isopeptide (Lys-Gly) (interchain with G-Cter in ubiquitin). Residues 868 to 1160 are disordered; it reads EGYESDAPCS…MTGPMKRQVA (293 aa). Positions 896 to 907 are enriched in acidic residues; it reads EDPEESNDDSSD. The segment covering 951 to 963 has biased composition (pro residues); it reads DLGPPHIPVPPSI. Ser-1025 bears the Phosphoserine mark. Residues 1031–1050 show a composition bias toward basic and acidic residues; the sequence is IKDEGDIKQAKKEDTDDRNK. A Glycyl lysine isopeptide (Lys-Gly) (interchain with G-Cter in SUMO2); alternate cross-link involves residue Lys-1032. A Glycyl lysine isopeptide (Lys-Gly) (interchain with G-Cter in SUMO1); alternate cross-link involves residue Lys-1032. Residue Lys-1038 forms a Glycyl lysine isopeptide (Lys-Gly) (interchain with G-Cter in SUMO2) linkage. Over residues 1052-1063 the composition is skewed to polar residues; sequence SVVTESSRNYGY. Ser-1066 is subject to Phosphoserine. Residue Lys-1069 forms a Glycyl lysine isopeptide (Lys-Gly) (interchain with G-Cter in SUMO2) linkage. Residues 1100 to 1115 are compositionally biased toward low complexity; that stretch reads LTLSSSTESEGESGTS. Over residues 1116-1140 the composition is skewed to polar residues; it reads RKPTAGQTSATAVDSDDIQTISSGS. Lys-1149 participates in a covalent cross-link: Glycyl lysine isopeptide (Lys-Gly) (interchain with G-Cter in SUMO2). Lys-1170 and Lys-1178 each carry N6,N6,N6-trimethyllysine; alternate. Residues Lys-1170 and Lys-1178 each carry the N6,N6-dimethyllysine; alternate modification. S-adenosyl-L-methionine-binding positions include Arg-1220 and 1223-1224; that span reads NH. Cys-1226, Cys-1279, Cys-1281, and Cys-1286 together coordinate Zn(2+). In terms of domain architecture, Post-SET spans 1275-1291; the sequence is KELLCCCGAIECRGRLL.

It belongs to the class V-like SAM-binding methyltransferase superfamily. Histone-lysine methyltransferase family. Suvar3-9 subfamily. As to quaternary structure, part of a complex containing at least CDYL, REST, WIZ, SETDB1, EHMT1 and EHMT2. Forms a complex with ATRX, TRIM28 and ZNF274. Probably part of a corepressor complex containing ZNF304, TRIM28, SETDB1 and DNMT1. Interacts with TRIM28/TIF1B. Interacts with ATF7IP and ATF7IP2; the interaction with ATF7IP protects SETDB1 from proteasomal degradation and is required to stimulate histone methyltransferase activity and facilitate the conversion of dimethylated to trimethylated H3 'Lys-9'. Interacts with CBX1 and CBX5. Interacts with DNMT3A and DNMT3B. Interacts with SUMO2. Interacts with MPHOSPH8. Interacts with ERG. Interacts with HDAC1, HDAC2, SIN3A and SIN3B. Interacts with ATRX. Interacts with RESF1. Interacts with ZNF638. Interacts with TASOR. Interacts with ZNF263; recruited to the SIX3 promoter along with other proteins involved in chromatin modification and transcriptional corepression where it contributes to transcriptional repression. Interacts with PHF13; the interaction probably enhances SETDB1 chromatin-associated levels and activity. Interacts with VRK1. In terms of processing, degraded by the proteasome, shielded by interaction with ATF7IP. Post-translationally, monoubiquitinated at Lys-867 by E2 enzymes of the UBE2E family. The conjugated-Ub is protected from deubiquitination by the SET domain. Monoubiquitination at Lys-867 is required for catalytic activity, H3K9 methylation and endogenous retrovirus silencing. As to expression, widely expressed. High expression in testis.

It localises to the nucleus. Its subcellular location is the cytoplasm. The protein localises to the chromosome. It catalyses the reaction N(6),N(6)-dimethyl-L-lysyl(9)-[histone H3] + S-adenosyl-L-methionine = N(6),N(6),N(6)-trimethyl-L-lysyl(9)-[histone H3] + S-adenosyl-L-homocysteine + H(+). In terms of biological role, histone methyltransferase that specifically trimethylates 'Lys-9' of histone H3. H3 'Lys-9' trimethylation represents a specific tag for epigenetic transcriptional repression by recruiting HP1 (CBX1, CBX3 and/or CBX5) proteins to methylated histones. Mainly functions in euchromatin regions, thereby playing a central role in the silencing of euchromatic genes. H3 'Lys-9' trimethylation is coordinated with DNA methylation. Required for HUSH-mediated heterochromatin formation and gene silencing. Forms a complex with MBD1 and ATF7IP that represses transcription and couples DNA methylation and histone 'Lys-9' trimethylation. Its activity is dependent on MBD1 and is heritably maintained through DNA replication by being recruited by CAF-1. SETDB1 is targeted to histone H3 by TRIM28/TIF1B, a factor recruited by KRAB zinc-finger proteins. Probably forms a corepressor complex required for activated KRAS-mediated promoter hypermethylation and transcriptional silencing of tumor suppressor genes (TSGs) or other tumor-related genes in colorectal cancer (CRC) cells. Required to maintain a transcriptionally repressive state of genes in undifferentiated embryonic stem cells (ESCs). In ESCs, in collaboration with TRIM28, is also required for H3K9me3 and silencing of endogenous and introduced retroviruses in a DNA-methylation independent-pathway. Associates at promoter regions of tumor suppressor genes (TSGs) leading to their gene silencing. The SETDB1-TRIM28-ZNF274 complex may play a role in recruiting ATRX to the 3'-exons of zinc-finger coding genes with atypical chromatin signatures to establish or maintain/protect H3K9me3 at these transcriptionally active regions. The protein is Histone-lysine N-methyltransferase SETDB1 of Homo sapiens (Human).